The sequence spans 46 residues: Esculentin-1SEb (46 aa).

A disulfide bridge links Cys-40 with Cys-46.

As to expression, expressed by the skin glands.

The protein resides in the secreted. In terms of biological role, mast cell degranulating peptide. Causes histamine release from rat peritoneal mast cells in vitro. Has antibacterial activity against the Gram-negative bacterium E.coli K12 and Gram-positive bacterium M.luteus NCT C2665. This chain is Esculentin-1SEb, found in Lithobates sevosus (Dusky gopher frog).